We begin with the raw amino-acid sequence, 91 residues long: Small ribosomal subunit protein bS18 (91 aa).

The protein belongs to the bacterial ribosomal protein bS18 family. As to quaternary structure, part of the 30S ribosomal subunit. Forms a tight heterodimer with protein bS6.

Binds as a heterodimer with protein bS6 to the central domain of the 16S rRNA, where it helps stabilize the platform of the 30S subunit. This is Small ribosomal subunit protein bS18 from Paraburkholderia phymatum (strain DSM 17167 / CIP 108236 / LMG 21445 / STM815) (Burkholderia phymatum).